Reading from the N-terminus, the 104-residue chain is Large ribosomal subunit protein uL24 (104 aa).

Belongs to the universal ribosomal protein uL24 family. Part of the 50S ribosomal subunit.

Its function is as follows. One of two assembly initiator proteins, it binds directly to the 5'-end of the 23S rRNA, where it nucleates assembly of the 50S subunit. In terms of biological role, one of the proteins that surrounds the polypeptide exit tunnel on the outside of the subunit. In Mesorhizobium japonicum (strain LMG 29417 / CECT 9101 / MAFF 303099) (Mesorhizobium loti (strain MAFF 303099)), this protein is Large ribosomal subunit protein uL24.